We begin with the raw amino-acid sequence, 179 residues long: ATP synthase subunit delta 2 (179 aa).

It belongs to the ATPase delta chain family. As to quaternary structure, F-type ATPases have 2 components, F(1) - the catalytic core - and F(0) - the membrane proton channel. F(1) has five subunits: alpha(3), beta(3), gamma(1), delta(1), epsilon(1). F(0) has three main subunits: a(1), b(2) and c(10-14). The alpha and beta chains form an alternating ring which encloses part of the gamma chain. F(1) is attached to F(0) by a central stalk formed by the gamma and epsilon chains, while a peripheral stalk is formed by the delta and b chains.

It localises to the cell inner membrane. Functionally, f(1)F(0) ATP synthase produces ATP from ADP in the presence of a proton or sodium gradient. F-type ATPases consist of two structural domains, F(1) containing the extramembraneous catalytic core and F(0) containing the membrane proton channel, linked together by a central stalk and a peripheral stalk. During catalysis, ATP synthesis in the catalytic domain of F(1) is coupled via a rotary mechanism of the central stalk subunits to proton translocation. In terms of biological role, this protein is part of the stalk that links CF(0) to CF(1). It either transmits conformational changes from CF(0) to CF(1) or is implicated in proton conduction. The chain is ATP synthase subunit delta 2 from Syntrophotalea carbinolica (strain DSM 2380 / NBRC 103641 / GraBd1) (Pelobacter carbinolicus).